We begin with the raw amino-acid sequence, 686 residues long: Leucine-rich repeat-containing protein 49 (686 aa).

7 LRR repeats span residues 113-134, 135-156, 157-178, 179-200, 201-222, 223-244, and 245-266; these read HLRLLNFQHNFITRIQNISNLQ, KLISLDLYDNQIEEISGLSTLR, CLRVLLLGKNRIKKISNLENLK, SLDVLDLHGNQITKIENINHLC, ELRVLNLARNFLSHVDNLNGLD, SLTELNLRHNQITFVRDVDNLP, and CLQHLFLSFNNISSFDSVSCLA. In terms of domain architecture, LRRCT spans 279-317; it reads NPIAQESWYKHTVLQNMMQLRQLDMKRITEEERRMASVL. The stretch at 303–341 forms a coiled coil; it reads MKRITEEERRMASVLAKKEEEKKRESHKQSLLKEKKRLT. The segment at 360-388 is disordered; sequence ATNEDRKDSDSPQDPCQIDGSTLSAFPEE.

As to quaternary structure, part of the neuronal tubulin polyglutamylase complex which contains TPGS1, TPGS2, TTLL1, LRRC49 and NICN1. Interacts with PCM1; TTLL1, TPGS1, TPGS2 and LRRC49.

The protein resides in the cytoplasm. It localises to the cytoskeleton. The protein localises to the microtubule organizing center. It is found in the centrosome. Its subcellular location is the centriolar satellite. In terms of biological role, subunit of the tubulin polyglutamylase complex (TPGC). The complex mediates cilia and flagella polyglutamylation which is essential for their biogenesis and motility. The chain is Leucine-rich repeat-containing protein 49 from Homo sapiens (Human).